A 126-amino-acid chain; its full sequence is Glycine cleavage system H protein (126 aa).

One can recognise a Lipoyl-binding domain in the interval I20–R102. K61 is modified (N6-lipoyllysine).

Belongs to the GcvH family. The glycine cleavage system is composed of four proteins: P, T, L and H. It depends on (R)-lipoate as a cofactor.

The glycine cleavage system catalyzes the degradation of glycine. The H protein shuttles the methylamine group of glycine from the P protein to the T protein. This Rhodospirillum rubrum (strain ATCC 11170 / ATH 1.1.1 / DSM 467 / LMG 4362 / NCIMB 8255 / S1) protein is Glycine cleavage system H protein.